Reading from the N-terminus, the 529-residue chain is Bifunctional purine biosynthesis protein PurH (529 aa).

One can recognise an MGS-like domain in the interval 1–148 (MQQHRPVRRA…KNHKDVAIVV (148 aa)).

This sequence belongs to the PurH family.

It carries out the reaction (6R)-10-formyltetrahydrofolate + 5-amino-1-(5-phospho-beta-D-ribosyl)imidazole-4-carboxamide = 5-formamido-1-(5-phospho-D-ribosyl)imidazole-4-carboxamide + (6S)-5,6,7,8-tetrahydrofolate. The enzyme catalyses IMP + H2O = 5-formamido-1-(5-phospho-D-ribosyl)imidazole-4-carboxamide. It participates in purine metabolism; IMP biosynthesis via de novo pathway; 5-formamido-1-(5-phospho-D-ribosyl)imidazole-4-carboxamide from 5-amino-1-(5-phospho-D-ribosyl)imidazole-4-carboxamide (10-formyl THF route): step 1/1. It functions in the pathway purine metabolism; IMP biosynthesis via de novo pathway; IMP from 5-formamido-1-(5-phospho-D-ribosyl)imidazole-4-carboxamide: step 1/1. In Erwinia tasmaniensis (strain DSM 17950 / CFBP 7177 / CIP 109463 / NCPPB 4357 / Et1/99), this protein is Bifunctional purine biosynthesis protein PurH.